We begin with the raw amino-acid sequence, 216 residues long: Probable nicotinate-nucleotide adenylyltransferase (216 aa).

This sequence belongs to the NadD family.

The enzyme catalyses nicotinate beta-D-ribonucleotide + ATP + H(+) = deamido-NAD(+) + diphosphate. Its pathway is cofactor biosynthesis; NAD(+) biosynthesis; deamido-NAD(+) from nicotinate D-ribonucleotide: step 1/1. Its function is as follows. Catalyzes the reversible adenylation of nicotinate mononucleotide (NaMN) to nicotinic acid adenine dinucleotide (NaAD). This is Probable nicotinate-nucleotide adenylyltransferase from Geobacter sp. (strain M21).